Consider the following 725-residue polypeptide: Methionine--tRNA ligase (725 aa).

Positions 27-37 (PYANGQIHIGH) match the 'HIGH' region motif. Residues cysteine 158, cysteine 161, cysteine 171, and cysteine 174 each coordinate Zn(2+). Residues 348-352 (KMSKS) carry the 'KMSKS' region motif. An ATP-binding site is contributed by lysine 351. The region spanning 619 to 725 (DFAKIDLRIA…SGAKPGMRVK (107 aa)) is the tRNA-binding domain.

Belongs to the class-I aminoacyl-tRNA synthetase family. MetG type 1 subfamily. Homodimer. Zn(2+) is required as a cofactor.

It is found in the cytoplasm. It catalyses the reaction tRNA(Met) + L-methionine + ATP = L-methionyl-tRNA(Met) + AMP + diphosphate. In terms of biological role, is required not only for elongation of protein synthesis but also for the initiation of all mRNA translation through initiator tRNA(fMet) aminoacylation. The protein is Methionine--tRNA ligase of Burkholderia pseudomallei (strain 1106a).